The following is a 432-amino-acid chain: Chaperone SurA (432 aa).

A signal peptide spans 1–26 (MKKIASFCSAAVLIASSFLLNNTVQA). 2 consecutive PpiC domains span residues 176-277 (QTEY…KVQD) and 286-386 (VQEV…EVTG).

It localises to the periplasm. It catalyses the reaction [protein]-peptidylproline (omega=180) = [protein]-peptidylproline (omega=0). In terms of biological role, chaperone involved in the correct folding and assembly of outer membrane proteins. Recognizes specific patterns of aromatic residues and the orientation of their side chains, which are found more frequently in integral outer membrane proteins. May act in both early periplasmic and late outer membrane-associated steps of protein maturation. The protein is Chaperone SurA of Idiomarina loihiensis (strain ATCC BAA-735 / DSM 15497 / L2-TR).